The chain runs to 404 residues: Probable homogentisate phytyltransferase 1, chloroplastic (404 aa).

The N-terminal 77 residues, 1 to 77 (MDSLRLRPSL…SHHRIPHRPT (77 aa)), are a transit peptide targeting the chloroplast. The interval 68-96 (SHHRIPHRPTSSSADASGQPLQSSAEAHD) is disordered. Over residues 76-92 (PTSSSADASGQPLQSSA) the composition is skewed to polar residues. A run of 9 helical transmembrane segments spans residues 119-139 (TVIG…ENLS), 144-164 (LFLT…IYIV), 184-204 (LASG…FAAM), 216-238 (PLFL…LPFL), 245-265 (VVAA…AFFL), 282-302 (LIFA…FKDI), 325-345 (VFWI…LMGA), 348-368 (ACLW…AILW), and 382-402 (ITSF…LIPL).

The protein belongs to the UbiA prenyltransferase family.

The protein resides in the plastid. It is found in the chloroplast thylakoid membrane. It catalyses the reaction phytyl diphosphate + homogentisate + H(+) = 2-methyl-6-phytyl-1,4-benzene-1,4-diol + CO2 + diphosphate. Its pathway is cofactor biosynthesis; tocopherol biosynthesis. Involved in the synthesis of tocopherol (vitamin E). Catalyzes the condensation of homogentisate and phytyl diphosphate to form dimethylphytylhydroquinone. In Oryza sativa subsp. japonica (Rice), this protein is Probable homogentisate phytyltransferase 1, chloroplastic (HPT1).